The following is a 124-amino-acid chain: Putative iron-sulfur cluster insertion protein ErpA (124 aa).

The iron-sulfur cluster site is built by C52, C116, and C118.

Belongs to the HesB/IscA family. In terms of assembly, homodimer. The cofactor is iron-sulfur cluster.

Its function is as follows. Required for insertion of 4Fe-4S clusters. The polypeptide is Putative iron-sulfur cluster insertion protein ErpA (Ralstonia nicotianae (strain ATCC BAA-1114 / GMI1000) (Ralstonia solanacearum)).